We begin with the raw amino-acid sequence, 588 residues long: DNA mismatch repair protein MutL (588 aa).

Belongs to the DNA mismatch repair MutL/HexB family.

Functionally, this protein is involved in the repair of mismatches in DNA. It is required for dam-dependent methyl-directed DNA mismatch repair. May act as a 'molecular matchmaker', a protein that promotes the formation of a stable complex between two or more DNA-binding proteins in an ATP-dependent manner without itself being part of a final effector complex. In Methanocorpusculum labreanum (strain ATCC 43576 / DSM 4855 / Z), this protein is DNA mismatch repair protein MutL.